The chain runs to 219 residues: Holliday junction branch migration complex subunit RuvA (219 aa).

Residues 1 to 66 (MIEYIIGKIS…NFLFEYYGFK (66 aa)) form a domain I region. Residues 67–148 (TLREKIFFEN…SEYNNDVNHS (82 aa)) are domain II. Residues 149–154 (SINQQS) are flexible linker. Residues 155 to 219 (NSYNPVPDLV…EAVTNKTTVS (65 aa)) form a domain III region.

Belongs to the RuvA family. In terms of assembly, homotetramer. Forms an RuvA(8)-RuvB(12)-Holliday junction (HJ) complex. HJ DNA is sandwiched between 2 RuvA tetramers; dsDNA enters through RuvA and exits via RuvB. An RuvB hexamer assembles on each DNA strand where it exits the tetramer. Each RuvB hexamer is contacted by two RuvA subunits (via domain III) on 2 adjacent RuvB subunits; this complex drives branch migration. In the full resolvosome a probable DNA-RuvA(4)-RuvB(12)-RuvC(2) complex forms which resolves the HJ.

It is found in the cytoplasm. In terms of biological role, the RuvA-RuvB-RuvC complex processes Holliday junction (HJ) DNA during genetic recombination and DNA repair, while the RuvA-RuvB complex plays an important role in the rescue of blocked DNA replication forks via replication fork reversal (RFR). RuvA specifically binds to HJ cruciform DNA, conferring on it an open structure. The RuvB hexamer acts as an ATP-dependent pump, pulling dsDNA into and through the RuvAB complex. HJ branch migration allows RuvC to scan DNA until it finds its consensus sequence, where it cleaves and resolves the cruciform DNA. The protein is Holliday junction branch migration complex subunit RuvA of Malacoplasma penetrans (strain HF-2) (Mycoplasma penetrans).